A 408-amino-acid polypeptide reads, in one-letter code: MSAIPNASNTSASTSFDAHRPLTLADINDPSTKHVIVGMSGGVDSSVSAVLLQQAGFMVEGLFMKNWEEDDGTEYCTAMDDLADAQAVCDKIGIKLHTANFAMEYWDRVFEHFLAEYKAGRTPNPDILCNKEIKFKAFLDYALTLGADYIATGHYTRRSVNYKNNDGIEVAQLLRGLDNNKDQSYFLHAVGGDKLAKTLFPVGELKKPVVRQIAEEHDLITANKKDSTGICFIGERRFKDFLQQYLPAQKGDIVTDDGITIGTHDGLMYYTLGQRGGIGIGGVKDRPEEPWFVLAKDLDNNRLIVGQGHEHAMMLSNELQAYKLDWVDVLPPADIFSEDGLRCMAKSRYRQPDQACTVFANNENGSEVRVVFDEPQRAVTPGQSAVFYIDEVCLGGGVIASIDAPCGI.

Residues 38–45 (GMSGGVDS) and Met-64 each bind ATP. The interaction with target base in tRNA stretch occupies residues 124–126 (NPD). The active-site Nucleophile is the Cys-129. Cys-129 and Cys-231 are joined by a disulfide. Gly-153 provides a ligand contact to ATP. The interval 181-183 (KDQ) is interaction with tRNA. Cys-231 functions as the Cysteine persulfide intermediate in the catalytic mechanism. The tract at residues 348 to 349 (RY) is interaction with tRNA.

It belongs to the MnmA/TRMU family.

It is found in the cytoplasm. The enzyme catalyses S-sulfanyl-L-cysteinyl-[protein] + uridine(34) in tRNA + AH2 + ATP = 2-thiouridine(34) in tRNA + L-cysteinyl-[protein] + A + AMP + diphosphate + H(+). Catalyzes the 2-thiolation of uridine at the wobble position (U34) of tRNA, leading to the formation of s(2)U34. This Psychrobacter cryohalolentis (strain ATCC BAA-1226 / DSM 17306 / VKM B-2378 / K5) protein is tRNA-specific 2-thiouridylase MnmA.